A 55-amino-acid chain; its full sequence is Large ribosomal subunit protein bL33 (55 aa).

Belongs to the bacterial ribosomal protein bL33 family.

In Sinorhizobium medicae (strain WSM419) (Ensifer medicae), this protein is Large ribosomal subunit protein bL33.